Reading from the N-terminus, the 186-residue chain is Protein MTH_152 (186 aa).

Belongs to the flavoredoxin family. As to quaternary structure, homodimer. Requires FMN as cofactor.

The protein is Protein MTH_152 of Methanothermobacter thermautotrophicus (strain ATCC 29096 / DSM 1053 / JCM 10044 / NBRC 100330 / Delta H) (Methanobacterium thermoautotrophicum).